Consider the following 430-residue polypeptide: MIOREX complex component 4 (430 aa).

A mitochondrion-targeting transit peptide spans 1-27; the sequence is MTVLYTSASLKKMKCLAFNMGMNCVRT. A helical transmembrane segment spans residues 403 to 420; the sequence is FLISLSALLASFFAYYRY.

As to quaternary structure, associates with the mitochondrial ribosome.

It localises to the mitochondrion. The protein resides in the mitochondrion membrane. In terms of biological role, component of MIOREX complexes, large expressome-like assemblies of ribosomes with factors involved in all the steps of post-transcriptional gene expression. The sequence is that of MIOREX complex component 4 from Saccharomyces cerevisiae (strain ATCC 204508 / S288c) (Baker's yeast).